A 469-amino-acid chain; its full sequence is Probable ribonuclease FAU-1 (469 aa).

The protein belongs to the FAU-1 family.

Its function is as follows. Probable RNase involved in rRNA stability through maturation and/or degradation of precursor rRNAs. Binds to RNA in loop regions with AU-rich sequences. The sequence is that of Probable ribonuclease FAU-1 from Pyrococcus abyssi (strain GE5 / Orsay).